Here is a 63-residue protein sequence, read N- to C-terminus: MNFYKIFVFVALILAISIGQSEAGWLKKLGKRIERIGQHTRDATIQGLGIAQQAANVAATARG.

A signal peptide spans 1-23; the sequence is MNFYKIFVFVALILAISIGQSEA. At Arg-62 the chain carries Arginine amide.

It belongs to the cecropin family.

It localises to the secreted. Its function is as follows. Cecropins have lytic and antibacterial activity against several Gram-positive and Gram-negative bacteria. The polypeptide is Cecropin-C (CecC) (Drosophila mauritiana (Fruit fly)).